We begin with the raw amino-acid sequence, 386 residues long: Succinate--CoA ligase [ADP-forming] subunit beta (386 aa).

An ATP-grasp domain is found at 9–244 (KEILRNFGVP…LDEEDPAEVE (236 aa)). ATP-binding positions include K46, 53–55 (GRG), E99, A102, and E107. Residues N199 and D213 each contribute to the Mg(2+) site. Residues N264 and 321–323 (GIM) each bind substrate.

It belongs to the succinate/malate CoA ligase beta subunit family. Heterotetramer of two alpha and two beta subunits. The cofactor is Mg(2+).

The catalysed reaction is succinate + ATP + CoA = succinyl-CoA + ADP + phosphate. It carries out the reaction GTP + succinate + CoA = succinyl-CoA + GDP + phosphate. Its pathway is carbohydrate metabolism; tricarboxylic acid cycle; succinate from succinyl-CoA (ligase route): step 1/1. Its function is as follows. Succinyl-CoA synthetase functions in the citric acid cycle (TCA), coupling the hydrolysis of succinyl-CoA to the synthesis of either ATP or GTP and thus represents the only step of substrate-level phosphorylation in the TCA. The beta subunit provides nucleotide specificity of the enzyme and binds the substrate succinate, while the binding sites for coenzyme A and phosphate are found in the alpha subunit. This Polaromonas sp. (strain JS666 / ATCC BAA-500) protein is Succinate--CoA ligase [ADP-forming] subunit beta.